We begin with the raw amino-acid sequence, 223 residues long: dITP/XTP pyrophosphatase (223 aa).

9 to 14 lines the substrate pocket; that stretch reads TTNQNK. The active-site Proton acceptor is Asp71. Mg(2+) is bound at residue Asp71. Residues Ser72, 152–155, Lys175, and 180–181 contribute to the substrate site; these read FGYD and HR. The tract at residues 203 to 223 is disordered; the sequence is LSEEKPAKPDHSEFEGNDWSK.

It belongs to the HAM1 NTPase family. In terms of assembly, homodimer. It depends on Mg(2+) as a cofactor.

It catalyses the reaction XTP + H2O = XMP + diphosphate + H(+). It carries out the reaction dITP + H2O = dIMP + diphosphate + H(+). The enzyme catalyses ITP + H2O = IMP + diphosphate + H(+). Pyrophosphatase that catalyzes the hydrolysis of nucleoside triphosphates to their monophosphate derivatives, with a high preference for the non-canonical purine nucleotides XTP (xanthosine triphosphate), dITP (deoxyinosine triphosphate) and ITP. Seems to function as a house-cleaning enzyme that removes non-canonical purine nucleotides from the nucleotide pool, thus preventing their incorporation into DNA/RNA and avoiding chromosomal lesions. This Desulfotalea psychrophila (strain LSv54 / DSM 12343) protein is dITP/XTP pyrophosphatase.